We begin with the raw amino-acid sequence, 124 residues long: Fluoride-specific ion channel FluC (124 aa).

The next 4 helical transmembrane spans lie at 3–23, 34–54, 68–88, and 100–120; these read VLLI…VSNL, IGTL…FIFI, LLLI…IETF, and ALNV…GVLI. Residues Gly-75 and Thr-78 each contribute to the Na(+) site.

Belongs to the fluoride channel Fluc/FEX (TC 1.A.43) family.

The protein localises to the cell inner membrane. The enzyme catalyses fluoride(in) = fluoride(out). With respect to regulation, na(+) is not transported, but it plays an essential structural role and its presence is essential for fluoride channel function. Functionally, fluoride-specific ion channel. Important for reducing fluoride concentration in the cell, thus reducing its toxicity. This Coxiella burnetii (strain CbuK_Q154) (Coxiella burnetii (strain Q154)) protein is Fluoride-specific ion channel FluC.